The primary structure comprises 263 residues: Isoprenyl transferase (263 aa).

Asp26 is an active-site residue. Asp26 lines the Mg(2+) pocket. Substrate-binding positions include 27-30 (GNGR), Trp31, Arg39, His43, and 71-73 (SSE). Residue Asn74 is the Proton acceptor of the active site. Substrate is bound by residues Trp75, Arg77, Arg191, and 197 to 199 (RIS). Mg(2+) is bound at residue Glu210. Residues 241–263 (GRTSEQIAGQQENKNTVSNEDRV) form a disordered region. The segment covering 243-263 (TSEQIAGQQENKNTVSNEDRV) has biased composition (polar residues).

It belongs to the UPP synthase family. As to quaternary structure, homodimer. It depends on Mg(2+) as a cofactor.

Catalyzes the condensation of isopentenyl diphosphate (IPP) with allylic pyrophosphates generating different type of terpenoids. In Nitrosomonas europaea (strain ATCC 19718 / CIP 103999 / KCTC 2705 / NBRC 14298), this protein is Isoprenyl transferase.